A 134-amino-acid polypeptide reads, in one-letter code: Small ribosomal subunit protein uS12 (134 aa).

At Asp89 the chain carries 3-methylthioaspartic acid. Positions 103 to 134 (DTAGVKDRKQGRSKYGAKRPKPGEAAATGKKK) are disordered. Over residues 113–122 (GRSKYGAKRP) the composition is skewed to basic residues.

This sequence belongs to the universal ribosomal protein uS12 family. In terms of assembly, part of the 30S ribosomal subunit. Contacts proteins S8 and S17. May interact with IF1 in the 30S initiation complex.

Functionally, with S4 and S5 plays an important role in translational accuracy. In terms of biological role, interacts with and stabilizes bases of the 16S rRNA that are involved in tRNA selection in the A site and with the mRNA backbone. Located at the interface of the 30S and 50S subunits, it traverses the body of the 30S subunit contacting proteins on the other side and probably holding the rRNA structure together. The combined cluster of proteins S8, S12 and S17 appears to hold together the shoulder and platform of the 30S subunit. The polypeptide is Small ribosomal subunit protein uS12 (Thermosynechococcus vestitus (strain NIES-2133 / IAM M-273 / BP-1)).